The primary structure comprises 435 residues: Trigger factor (435 aa).

The PPIase FKBP-type domain maps to 162–247 (GDRVIIDFKG…VKNVAEATLP (86 aa)).

The protein belongs to the FKBP-type PPIase family. Tig subfamily.

The protein localises to the cytoplasm. The enzyme catalyses [protein]-peptidylproline (omega=180) = [protein]-peptidylproline (omega=0). In terms of biological role, involved in protein export. Acts as a chaperone by maintaining the newly synthesized protein in an open conformation. Functions as a peptidyl-prolyl cis-trans isomerase. The polypeptide is Trigger factor (Chromobacterium violaceum (strain ATCC 12472 / DSM 30191 / JCM 1249 / CCUG 213 / NBRC 12614 / NCIMB 9131 / NCTC 9757 / MK)).